Consider the following 1188-residue polypeptide: DNA polymerase (1188 aa).

The segment at 1-74 (MALVPSPRAG…PAANNVSLTP (74 aa)) is disordered. Positions 31 to 41 (STAGAAPTATR) are enriched in low complexity.

Belongs to the DNA polymerase type-B family. In terms of assembly, heterodimer with the terminal protein; this heterodimer binds to bp 9 to 18 of the genome. Forms a complex with viral pTP, DBP and hosts NFIA and POU2F1/OCT1 for initiation of replication.

It is found in the host nucleus. It catalyses the reaction DNA(n) + a 2'-deoxyribonucleoside 5'-triphosphate = DNA(n+1) + diphosphate. Eukaryotic-type DNA polymerase involved in viral genomic replication. DNA synthesis is protein primed, and acts in a strand displacement replication. Assembles in complex with viral pTP, DBP, host NFIA and host POU2F1/OCT1 on viral origin of replication. The polymerase covalently transfers dCMP onto pTP, thereby initiating complementary strand synthesis. This Human adenovirus F serotype 40 (HAdV-40) protein is DNA polymerase.